Consider the following 31-residue polypeptide: MVILISYFCFLLVFFLFTLILFIGFNRIRLI.

A helical membrane pass occupies residues 3 to 23 (ILISYFCFLLVFFLFTLILFI).

It belongs to the PetL family. The 4 large subunits of the cytochrome b6-f complex are cytochrome b6, subunit IV (17 kDa polypeptide, PetD), cytochrome f and the Rieske protein, while the 4 small subunits are PetG, PetL, PetM and PetN. The complex functions as a dimer.

Its subcellular location is the plastid. The protein resides in the chloroplast thylakoid membrane. In terms of biological role, component of the cytochrome b6-f complex, which mediates electron transfer between photosystem II (PSII) and photosystem I (PSI), cyclic electron flow around PSI, and state transitions. PetL is important for photoautotrophic growth as well as for electron transfer efficiency and stability of the cytochrome b6-f complex. The chain is Cytochrome b6-f complex subunit 6 from Welwitschia mirabilis (Tree tumbo).